We begin with the raw amino-acid sequence, 117 residues long: Inner kinetochore subunit MHF1 (117 aa).

Belongs to the TAF9 family. CENP-S/MHF1 subfamily. In terms of assembly, the MHF histone-fold complex is a heterotetramer of 2 MHF1-MHF2 heterodimers. Together with MPH1/FANCM, forms the FANCM-MHF complex. Component of the inner kinetochore constitutive centromere-associated network (CCAN).

Functionally, dsDNA-binding component of a FANCM-MHF complex involved in DNA damage repair and genome maintenance. FANCM-MHF promotes gene conversion at blocked replication forks, probably by reversal of the stalled fork. Component of the kinetochore, a multiprotein complex that assembles on centromeric DNA and attaches chromosomes to spindle microtubules, mediating chromosome segregation and sister chromatid segregation during meiosis and mitosis. Component of the inner kinetochore constitutive centromere-associated network (CCAN), which serves as a structural platform for outer kinetochore assembly. The sequence is that of Inner kinetochore subunit MHF1 from Candida albicans (strain SC5314 / ATCC MYA-2876) (Yeast).